A 291-amino-acid chain; its full sequence is N-acetylmannosamine kinase (291 aa).

Residues 5–12 (AIDIGGTK) and 132–139 (GVGGGVVS) each bind ATP. Zn(2+) is bound by residues H156, C166, C168, and C173.

Belongs to the ROK (NagC/XylR) family. NanK subfamily. In terms of assembly, homodimer.

It catalyses the reaction an N-acyl-D-mannosamine + ATP = an N-acyl-D-mannosamine 6-phosphate + ADP + H(+). It functions in the pathway amino-sugar metabolism; N-acetylneuraminate degradation; D-fructose 6-phosphate from N-acetylneuraminate: step 2/5. Functionally, catalyzes the phosphorylation of N-acetylmannosamine (ManNAc) to ManNAc-6-P. The protein is N-acetylmannosamine kinase of Shigella boydii serotype 18 (strain CDC 3083-94 / BS512).